Consider the following 408-residue polypeptide: Phosphoglycerate kinase (408 aa).

Substrate is bound by residues 24-26 (DIN), Arg-40, 63-66 (HQGR), Arg-120, and Arg-160. Residues Glu-331 and 357-360 (GGHM) contribute to the ATP site.

It belongs to the phosphoglycerate kinase family.

Its subcellular location is the cytoplasm. The catalysed reaction is (2R)-3-phosphoglycerate + ATP = (2R)-3-phospho-glyceroyl phosphate + ADP. It functions in the pathway carbohydrate degradation; glycolysis; pyruvate from D-glyceraldehyde 3-phosphate: step 2/5. The protein is Phosphoglycerate kinase (pgk) of Saccharolobus solfataricus (strain ATCC 35092 / DSM 1617 / JCM 11322 / P2) (Sulfolobus solfataricus).